The chain runs to 101 residues: Small ubiquitin-related modifier 5 (101 aa).

The Required for PML-NB formation signature appears at 17-21 (IKDED). Residue Lys18 forms a Glycyl lysine isopeptide (Lys-Gly) (interchain with G-Cter in SUMO1P1/SUMO5) linkage. One can recognise a Ubiquitin-like domain in the interval 20-97 (EDIKLRVIGQ…IEVYQEQIGG (78 aa)). Gly97 participates in a covalent cross-link: Glycyl lysine isopeptide (Gly-Lys) (interchain with K-? in acceptor proteins). Positions 98 to 101 (HSTV) are excised as a propeptide.

It belongs to the ubiquitin family. SUMO subfamily. Interacts with CBX4. Interacts with PIAS1. Found in a complex with SAE2. Interacts with UBE2I. Interacts with SP100. Interacts with HIPK2. Interacts with DAXX. Interacts with PML-RARA oncoprotein; PML-RARalpha outcompetes PML for SUMO1P1/SUMO5 conjugation. Post-translationally, cleavage of precursor form is necessary for function. Autosumoylated at Lys-18. High expression levels in testes and peripheral blood leukocyte. Expressed also in lung, placenta, liver, spleen and thymus.

The protein localises to the nucleus. In terms of biological role, ubiquitin-like protein that can be covalently attached to proteins as a monomer or as a lysine-linked polymer. Regulates the life cycle of promyelocytic leukemia nuclear bodies (PML-NBs). PolySUMO1P1/SUMO5 conjugation on 'Lys-160' of PML facilitates recruitment of PML-NB components, which enlarges PML-NB. SUMO1P1/SUMO5 also increases polySUMO2/3 conjugation of PML, resulting in RNF4-mediated disruption of PML-NBs. This Homo sapiens (Human) protein is Small ubiquitin-related modifier 5.